The following is a 61-amino-acid chain: Large ribosomal subunit protein uL30 (61 aa).

Belongs to the universal ribosomal protein uL30 family. Part of the 50S ribosomal subunit.

The chain is Large ribosomal subunit protein uL30 from Chlorobium limicola (strain DSM 245 / NBRC 103803 / 6330).